A 125-amino-acid chain; its full sequence is UPF0231 protein APL_0968 (125 aa).

Belongs to the UPF0231 family.

The chain is UPF0231 protein APL_0968 from Actinobacillus pleuropneumoniae serotype 5b (strain L20).